The primary structure comprises 89 residues: Luqin-like RYamide peptides lury-1 (89 aa).

The first 19 residues, 1–19, serve as a signal peptide directing secretion; sequence MLTRVPVLILAVIVMLALC. Residues 20–26 constitute a propeptide that is removed on maturation; sequence QEPEKPE. A tyrosine amide mark is found at Tyr-35 and Tyr-43. The propeptide occupies 47–89; the sequence is SGNLMESSQNSLTEESSDVVCQLIDGKYICLPVDAVRFRPFFL.

In terms of tissue distribution, expressed in the M1 and M2 pharyngeal neurons from where the LURY-1-1 and LURY-1-2 peptides are secreted.

It localises to the secreted. Acts as a ligand for the npr-22 receptor and controls food-related processes including feeding, lifespan, egg-laying and roaming behavior. Secreted in the presence of food, leading to reduced feeding and roaming behavior and increased egg laying and lifespan. Activity may be latent under normal conditions but induced under conditions that cause hyperactivation of the pharynx such as abrupt refeeding after starvation. This is Luqin-like RYamide peptides lury-1 from Caenorhabditis elegans.